A 408-amino-acid polypeptide reads, in one-letter code: NADH-quinone oxidoreductase subunit D (408 aa).

Belongs to the complex I 49 kDa subunit family. In terms of assembly, NDH-1 is composed of 14 different subunits. Subunits NuoB, C, D, E, F, and G constitute the peripheral sector of the complex.

The protein localises to the cell inner membrane. It carries out the reaction a quinone + NADH + 5 H(+)(in) = a quinol + NAD(+) + 4 H(+)(out). Its function is as follows. NDH-1 shuttles electrons from NADH, via FMN and iron-sulfur (Fe-S) centers, to quinones in the respiratory chain. The immediate electron acceptor for the enzyme in this species is believed to be ubiquinone. Couples the redox reaction to proton translocation (for every two electrons transferred, four hydrogen ions are translocated across the cytoplasmic membrane), and thus conserves the redox energy in a proton gradient. This chain is NADH-quinone oxidoreductase subunit D, found in Wolinella succinogenes (strain ATCC 29543 / DSM 1740 / CCUG 13145 / JCM 31913 / LMG 7466 / NCTC 11488 / FDC 602W) (Vibrio succinogenes).